Reading from the N-terminus, the 596-residue chain is MGKKHKKHKSEWRSYDAGELGSPGDQSQYYVDKPLEKPLKLVLKVGGSEVTELSGSGHDSSFYEDRSDHERERHKEKKKKKKKKSEKEKDKYLDEDERRRRKEEKKRKREKEQCDSEGETEVFESVRKVDIEATDRPVRACRTHPAENESTPLQQLLEYFLRQLQRKDPNGFFAFPVTDQIAPGYFMIIKNPMDFSTMKEKISQNEYKSVTEFKADFKLMCDNAMTYNRPETVYYKLAKKLLHTGFKMMSKQAALLGDEDTTTEEPTPEIIMPTAAEVVKKSKKPSKDMFRVMEEDQSSIFEPEGNACSLTDSTAEEHVLALVEHAADEARDKINRYLPNCRIGYLKKNADGTLIYTVVNGDPENEEEDTHLVDLSSLSSKLLPSFTTLGFKEDRRHKVTFLNSTGTALSLQNNTLFTNLKPDQIDLMYAGYGDDTGIQCALSLQEFVKDCGSFAKRMVNDLLDQITGGDHSRTIYQMAGSEREGSSNSVLDYMALKTYSDVSLDMSMLSSLDKVKKELEHEDSHLNLDDASKLLPDFHDVHNDRGGSRPSSSSSVSNNSERDHHLGSPSRISVGEQQDIHDPYEFLQSPETENQN.

The segment covering 1-10 (MGKKHKKHKS) has biased composition (basic residues). Disordered stretches follow at residues 1 to 31 (MGKKHKKHKSEWRSYDAGELGSPGDQSQYYV) and 49 to 119 (EVTE…SEGE). Over residues 61–73 (SFYEDRSDHERER) the composition is skewed to basic and acidic residues. Basic residues predominate over residues 74–84 (HKEKKKKKKKK). Residues 85-98 (SEKEKDKYLDEDER) are compositionally biased toward basic and acidic residues. A compositionally biased stretch (basic residues) spans 99-109 (RRRKEEKKRKR). The Bromo domain occupies 148-252 (NESTPLQQLL…HTGFKMMSKQ (105 aa)). A histone H4K5ac H4K8ac and histone H4K5bu H4K8bu binding region spans residues 226-228 (TYN). Residues 537 to 547 (DFHDVHNDRGG) show a composition bias toward basic and acidic residues. The segment at 537-596 (DFHDVHNDRGGSRPSSSSSVSNNSERDHHLGSPSRISVGEQQDIHDPYEFLQSPETENQN) is disordered. Residues 548–559 (SRPSSSSSVSNN) are compositionally biased toward low complexity.

In terms of assembly, binds acetylated histones H3 and H4. Binds butyrylated histone H4.

The protein resides in the nucleus. Its function is as follows. Plays a role in chromatin remodeling and regulation of transcription. Acts as a chromatin reader that recognizes and binds acylated histones: binds histones that are acetylated and/or butyrylated. In Xenopus tropicalis (Western clawed frog), this protein is Bromodomain-containing protein 9 (brd9).